The primary structure comprises 527 residues: Peptide chain release factor 3 (527 aa).

The tr-type G domain maps to 9-277; it reads AKRRTFAIIS…AVVDWAPRPL (269 aa). GTP contacts are provided by residues 18-25, 86-90, and 140-143; these read SHPDAGKT, DTPGH, and NKLD.

Belongs to the TRAFAC class translation factor GTPase superfamily. Classic translation factor GTPase family. PrfC subfamily.

The protein localises to the cytoplasm. In terms of biological role, increases the formation of ribosomal termination complexes and stimulates activities of RF-1 and RF-2. It binds guanine nucleotides and has strong preference for UGA stop codons. It may interact directly with the ribosome. The stimulation of RF-1 and RF-2 is significantly reduced by GTP and GDP, but not by GMP. This is Peptide chain release factor 3 from Pseudomonas entomophila (strain L48).